A 153-amino-acid polypeptide reads, in one-letter code: 3-hydroxyacyl-[acyl-carrier-protein] dehydratase FabZ (153 aa).

The active site involves H58.

The protein belongs to the thioester dehydratase family. FabZ subfamily.

It is found in the cytoplasm. It carries out the reaction a (3R)-hydroxyacyl-[ACP] = a (2E)-enoyl-[ACP] + H2O. Functionally, involved in unsaturated fatty acids biosynthesis. Catalyzes the dehydration of short chain beta-hydroxyacyl-ACPs and long chain saturated and unsaturated beta-hydroxyacyl-ACPs. This is 3-hydroxyacyl-[acyl-carrier-protein] dehydratase FabZ from Bradyrhizobium diazoefficiens (strain JCM 10833 / BCRC 13528 / IAM 13628 / NBRC 14792 / USDA 110).